A 595-amino-acid chain; its full sequence is Zinc finger protein 467 (595 aa).

The tract at residues 1 to 67 (MRETLEALSS…EEGAHTEQAE (67 aa)) is disordered. K97 participates in a covalent cross-link: Glycyl lysine isopeptide (Lys-Gly) (interchain with G-Cter in SUMO2). 6 consecutive C2H2-type zinc fingers follow at residues 160-182 (YGCG…QRLH), 188-210 (CACP…QRSH), 216-238 (FPCS…LRTH), 244-266 (YPCA…QKTH), 272-294 (FPCT…QRIH), and 300-322 (YQCA…QRVH). A disordered region spans residues 313–350 (QHLVRHQRVHQTAGPARPSPDSSASPHSTAPSPTPSFP). A compositionally biased stretch (low complexity) spans 325-343 (AGPARPSPDSSASPHSTAP). 6 C2H2-type zinc fingers span residues 355-377 (FACS…QCLH), 431-453 (FFCP…PRVH), 459-481 (FACT…SRAH), 487-509 (FACA…QAVH), 515-537 (HACA…QAIH), and 543-565 (FSCP…QLIH). A Glycyl lysine isopeptide (Lys-Gly) (interchain with G-Cter in SUMO2) cross-link involves residue K368.

The protein belongs to the krueppel C2H2-type zinc-finger protein family. In terms of assembly, interacts with STAT3. Enhances STAT3 activity by keeping it in the nucleus.

The protein resides in the nucleus. Functionally, transcription factor that promotes adipocyte differentiation and suppresses osteoblast differentiation in the bone marrow. Enhances the osteoclast-supporting ability of stromal cells. Binds with STAT3 the consensus sequence 5'-CTTCTGGGAAGA-3' of the acute phase response element (APRE). Transactivates several promoters including FOS, OSM and PPARG. Recruits a histone deacetylase complex. This chain is Zinc finger protein 467 (ZNF467), found in Homo sapiens (Human).